We begin with the raw amino-acid sequence, 328 residues long: DNA-directed RNA polymerase subunit alpha (328 aa).

The alpha N-terminal domain (alpha-NTD) stretch occupies residues 1–232 (MSTQGFLKPR…DQISVFAALE (232 aa)). Residues 248 to 328 (IDPVLLRPVD…NWPPLGLERP (81 aa)) are alpha C-terminal domain (alpha-CTD).

It belongs to the RNA polymerase alpha chain family. As to quaternary structure, homodimer. The RNAP catalytic core consists of 2 alpha, 1 beta, 1 beta' and 1 omega subunit. When a sigma factor is associated with the core the holoenzyme is formed, which can initiate transcription.

It catalyses the reaction RNA(n) + a ribonucleoside 5'-triphosphate = RNA(n+1) + diphosphate. Its function is as follows. DNA-dependent RNA polymerase catalyzes the transcription of DNA into RNA using the four ribonucleoside triphosphates as substrates. The protein is DNA-directed RNA polymerase subunit alpha of Bordetella avium (strain 197N).